We begin with the raw amino-acid sequence, 130 residues long: Small ribosomal subunit protein uS8 (130 aa).

The protein belongs to the universal ribosomal protein uS8 family. As to quaternary structure, part of the 30S ribosomal subunit.

One of the primary rRNA binding proteins, it binds directly to 16S rRNA central domain where it helps coordinate assembly of the platform of the 30S subunit. This Methanobrevibacter smithii (strain ATCC 35061 / DSM 861 / OCM 144 / PS) protein is Small ribosomal subunit protein uS8.